A 248-amino-acid polypeptide reads, in one-letter code: 4-hydroxy-tetrahydrodipicolinate reductase (248 aa).

Residues 9 to 14 (GAKGRV), 77 to 79 (GTT), and 104 to 107 (APNF) each bind NAD(+). The active-site Proton donor/acceptor is His134. Residue His135 coordinates (S)-2,3,4,5-tetrahydrodipicolinate. Lys138 (proton donor) is an active-site residue. Residue 144–145 (GT) participates in (S)-2,3,4,5-tetrahydrodipicolinate binding.

It belongs to the DapB family.

It is found in the cytoplasm. The catalysed reaction is (S)-2,3,4,5-tetrahydrodipicolinate + NAD(+) + H2O = (2S,4S)-4-hydroxy-2,3,4,5-tetrahydrodipicolinate + NADH + H(+). It catalyses the reaction (S)-2,3,4,5-tetrahydrodipicolinate + NADP(+) + H2O = (2S,4S)-4-hydroxy-2,3,4,5-tetrahydrodipicolinate + NADPH + H(+). It participates in amino-acid biosynthesis; L-lysine biosynthesis via DAP pathway; (S)-tetrahydrodipicolinate from L-aspartate: step 4/4. Catalyzes the conversion of 4-hydroxy-tetrahydrodipicolinate (HTPA) to tetrahydrodipicolinate. The protein is 4-hydroxy-tetrahydrodipicolinate reductase of Corynebacterium glutamicum (strain ATCC 13032 / DSM 20300 / JCM 1318 / BCRC 11384 / CCUG 27702 / LMG 3730 / NBRC 12168 / NCIMB 10025 / NRRL B-2784 / 534).